The following is a 67-amino-acid chain: (2R)-sulfolactate sulfo-lyase subunit alpha (67 aa).

As to quaternary structure, (2R)-sulfolactate sulfo-lyase is composed of a SuyA and a SuyB subunit.

The protein resides in the cytoplasm. The enzyme catalyses (2R)-3-sulfolactate = sulfite + pyruvate + H(+). Together with SuyB, desulfonates sulfolactate to pyruvate and sulfite. The protein is (2R)-sulfolactate sulfo-lyase subunit alpha (suyA) of Paracoccus pantotrophus (Thiosphaera pantotropha).